The following is a 568-amino-acid chain: Periplasmic pectate lyase (568 aa).

An N-terminal signal peptide occupies residues 1-19 (MKRFALSLLAGLVALQASA).

Belongs to the polysaccharide lyase 2 family.

The protein localises to the periplasm. It carries out the reaction Eliminative cleavage of (1-&gt;4)-alpha-D-galacturonan to give oligosaccharides with 4-deoxy-alpha-D-galact-4-enuronosyl groups at their non-reducing ends.. It functions in the pathway glycan metabolism; pectin degradation; 2-dehydro-3-deoxy-D-gluconate from pectin: step 2/5. The protein is Periplasmic pectate lyase (pelB) of Pectobacterium carotovorum subsp. carotovorum (Erwinia carotovora subsp. carotovora).